Consider the following 299-residue polypeptide: Acetylglutamate kinase (299 aa).

Substrate-binding positions include 72–73 (GG), Arg-94, and Asn-196.

The protein belongs to the acetylglutamate kinase family. ArgB subfamily.

The protein localises to the cytoplasm. The enzyme catalyses N-acetyl-L-glutamate + ATP = N-acetyl-L-glutamyl 5-phosphate + ADP. It participates in amino-acid biosynthesis; L-arginine biosynthesis; N(2)-acetyl-L-ornithine from L-glutamate: step 2/4. Catalyzes the ATP-dependent phosphorylation of N-acetyl-L-glutamate. This chain is Acetylglutamate kinase, found in Burkholderia cenocepacia (strain ATCC BAA-245 / DSM 16553 / LMG 16656 / NCTC 13227 / J2315 / CF5610) (Burkholderia cepacia (strain J2315)).